A 305-amino-acid chain; its full sequence is Protoheme IX farnesyltransferase (305 aa).

Transmembrane regions (helical) follow at residues 31 to 51 (VMSLVIFTGFVGIWLAPYSVH), 52 to 72 (PFIAGIAVVCIALGAGSAGAI), 102 to 119 (ALSFGLITGFFAVFFMAL), 123 to 145 (LLASFLLLFTIFYYICIYTIWLK), 151 to 171 (NIVIGGVSGALPPVIGYAAVS), 179 to 199 (IILFLIIFIWTPPHSWALALF), 225 to 245 (ILIYSILLFIVSLMPFFIGMN), 247 to 267 (FIYLITSGILGLVFLYYSGSL), and 284 to 304 (SIFYLFFIFLLLSSTSTISLI).

It belongs to the UbiA prenyltransferase family. Protoheme IX farnesyltransferase subfamily.

The protein resides in the cell inner membrane. It carries out the reaction heme b + (2E,6E)-farnesyl diphosphate + H2O = Fe(II)-heme o + diphosphate. It participates in porphyrin-containing compound metabolism; heme O biosynthesis; heme O from protoheme: step 1/1. Functionally, converts heme B (protoheme IX) to heme O by substitution of the vinyl group on carbon 2 of heme B porphyrin ring with a hydroxyethyl farnesyl side group. The polypeptide is Protoheme IX farnesyltransferase (Rickettsia felis (strain ATCC VR-1525 / URRWXCal2) (Rickettsia azadi)).